The following is a 142-amino-acid chain: Large ribosomal subunit protein uL11 (142 aa).

This sequence belongs to the universal ribosomal protein uL11 family. Part of the ribosomal stalk of the 50S ribosomal subunit. Interacts with L10 and the large rRNA to form the base of the stalk. L10 forms an elongated spine to which L12 dimers bind in a sequential fashion forming a multimeric L10(L12)X complex. One or more lysine residues are methylated.

Functionally, forms part of the ribosomal stalk which helps the ribosome interact with GTP-bound translation factors. This Bradyrhizobium diazoefficiens (strain JCM 10833 / BCRC 13528 / IAM 13628 / NBRC 14792 / USDA 110) protein is Large ribosomal subunit protein uL11.